A 200-amino-acid chain; its full sequence is UPF0301 protein BR0480/BS1330_I0481 (200 aa).

It belongs to the UPF0301 (AlgH) family.

In Brucella suis biovar 1 (strain 1330), this protein is UPF0301 protein BR0480/BS1330_I0481.